The sequence spans 223 residues: Serine/threonine/tyrosine-interacting protein A (223 aa).

Residues 28–176 (EMQEILPGLF…LQEYEAIYLA (149 aa)) enclose the Tyrosine-protein phosphatase domain.

This sequence belongs to the protein-tyrosine phosphatase family. Non-receptor class subfamily.

Functionally, catalytically inactive phosphatase. In Xenopus laevis (African clawed frog), this protein is Serine/threonine/tyrosine-interacting protein A (styx-a).